A 90-amino-acid polypeptide reads, in one-letter code: Protein PRAC2 (90 aa).

In terms of tissue distribution, highly expressed in prostate and testis. Also detected in placenta, muscle, colon, peripheral blood leukocytes and skin.

It is found in the nucleus. The sequence is that of Protein PRAC2 from Homo sapiens (Human).